The chain runs to 359 residues: 3-isopropylmalate dehydrogenase (359 aa).

Substrate is bound by residues Arg-96, Arg-106, Arg-134, and Asp-223. The Mg(2+) site is built by Asp-223, Asp-247, and Asp-251. 281–293 provides a ligand contact to NAD(+); sequence GSAPDIAGQGIAN.

The protein belongs to the isocitrate and isopropylmalate dehydrogenases family. LeuB type 1 subfamily. As to quaternary structure, homodimer. Mg(2+) is required as a cofactor. Requires Mn(2+) as cofactor.

Its subcellular location is the cytoplasm. The catalysed reaction is (2R,3S)-3-isopropylmalate + NAD(+) = 4-methyl-2-oxopentanoate + CO2 + NADH. It functions in the pathway amino-acid biosynthesis; L-leucine biosynthesis; L-leucine from 3-methyl-2-oxobutanoate: step 3/4. Catalyzes the oxidation of 3-carboxy-2-hydroxy-4-methylpentanoate (3-isopropylmalate) to 3-carboxy-4-methyl-2-oxopentanoate. The product decarboxylates to 4-methyl-2 oxopentanoate. The chain is 3-isopropylmalate dehydrogenase from Chromohalobacter salexigens (strain ATCC BAA-138 / DSM 3043 / CIP 106854 / NCIMB 13768 / 1H11).